The chain runs to 530 residues: UDP-N-acetylmuramoyl-L-alanyl-D-glutamate--2,6-diaminopimelate ligase (530 aa).

UDP-N-acetyl-alpha-D-muramoyl-L-alanyl-D-glutamate is bound at residue Ser21. An ATP-binding site is contributed by 99–105 (GTNGKSS). UDP-N-acetyl-alpha-D-muramoyl-L-alanyl-D-glutamate is bound by residues 145-146 (TT), Ser172, Gln178, and Arg180. N6-carboxylysine is present on Lys212. The 49-residue stretch at 221 to 269 (FKPAYREEFKGDTEHSTTAYILVREDASTGSTSKLLLEAKFGKMSTEYL) folds into the RPE1 insert domain. Meso-2,6-diaminopimelate-binding positions include Arg422, 446-449 (DNPR), Gly496, and Glu500. The short motif at 446–449 (DNPR) is the Meso-diaminopimelate recognition motif element.

Belongs to the MurCDEF family. MurE subfamily. Mg(2+) is required as a cofactor. In terms of processing, carboxylation is probably crucial for Mg(2+) binding and, consequently, for the gamma-phosphate positioning of ATP.

The protein resides in the cytoplasm. The catalysed reaction is UDP-N-acetyl-alpha-D-muramoyl-L-alanyl-D-glutamate + meso-2,6-diaminopimelate + ATP = UDP-N-acetyl-alpha-D-muramoyl-L-alanyl-gamma-D-glutamyl-meso-2,6-diaminopimelate + ADP + phosphate + H(+). Its pathway is cell wall biogenesis; peptidoglycan biosynthesis. Catalyzes the addition of meso-diaminopimelic acid to the nucleotide precursor UDP-N-acetylmuramoyl-L-alanyl-D-glutamate (UMAG) in the biosynthesis of bacterial cell-wall peptidoglycan. The chain is UDP-N-acetylmuramoyl-L-alanyl-D-glutamate--2,6-diaminopimelate ligase from Rickettsia felis (strain ATCC VR-1525 / URRWXCal2) (Rickettsia azadi).